The chain runs to 119 residues: Large ribosomal subunit protein bL20 (119 aa).

Belongs to the bacterial ribosomal protein bL20 family.

Its function is as follows. Binds directly to 23S ribosomal RNA and is necessary for the in vitro assembly process of the 50S ribosomal subunit. It is not involved in the protein synthesizing functions of that subunit. The protein is Large ribosomal subunit protein bL20 of Treponema denticola (strain ATCC 35405 / DSM 14222 / CIP 103919 / JCM 8153 / KCTC 15104).